Consider the following 266-residue polypeptide: tRNA pseudouridine synthase A (266 aa).

Aspartate 52 (nucleophile) is an active-site residue. Tyrosine 113 lines the substrate pocket.

The protein belongs to the tRNA pseudouridine synthase TruA family. In terms of assembly, homodimer.

It catalyses the reaction uridine(38/39/40) in tRNA = pseudouridine(38/39/40) in tRNA. In terms of biological role, formation of pseudouridine at positions 38, 39 and 40 in the anticodon stem and loop of transfer RNAs. The polypeptide is tRNA pseudouridine synthase A (Agrobacterium fabrum (strain C58 / ATCC 33970) (Agrobacterium tumefaciens (strain C58))).